The chain runs to 130 residues: Large ribosomal subunit protein bL17 (130 aa).

Belongs to the bacterial ribosomal protein bL17 family. In terms of assembly, part of the 50S ribosomal subunit. Contacts protein L32.

In Pectobacterium atrosepticum (strain SCRI 1043 / ATCC BAA-672) (Erwinia carotovora subsp. atroseptica), this protein is Large ribosomal subunit protein bL17.